Reading from the N-terminus, the 269-residue chain is Myelin protein zero-like protein 1 (269 aa).

Residues 1-35 (MAASAGAGAVIAAPDSRRWLWSVLAAALGLLTAGV) form the signal peptide. One can recognise an Ig-like V-type domain in the interval 36 to 146 (SALEVYTPKE…VKNPPDIVVQ (111 aa)). The Extracellular segment spans residues 36-162 (SALEVYTPKE…YVVEKENLPV (127 aa)). N50 and N130 each carry an N-linked (GlcNAc...) asparagine glycan. A disulfide bond links C58 and C135. A helical transmembrane segment spans residues 163-183 (FPVWVVVGIVTAVVLGLTLLI). At 184–269 (SMILAVLYRR…SVVYADIRKN (86 aa)) the chain is on the cytoplasmic side. A disordered region spans residues 199-238 (DYTGCSTSESLSPVKQAPRKSPSDTEGLVKSLPSGSHQGP). Over residues 202-211 (GCSTSESLSP) the composition is skewed to polar residues. Phosphoserine is present on residues S204, S206, S208, S210, S219, and S221. Residues 239–244 (VIYAQL) carry the ITIM motif 1 motif. Y241 bears the Phosphotyrosine mark. Phosphoserine is present on S260. Positions 261-266 (VVYADI) match the ITIM motif 2 motif. A Phosphotyrosine modification is found at Y263.

The protein belongs to the myelin P0 protein family. As to quaternary structure, interacts with phosphorylated PTPN11/SHP-2. Phosphorylated on tyrosine residues upon stimulation with pervanadate and concanavalin-A (ConA). Phosphorylation at Tyr-241 and Tyr-263 is required for interaction with PTPN11/SHP-2. Dephosphorylated by PTPN11/SHP-2 (in vitro). Post-translationally, N-glycosylated. N-glycosylation is required for concanavalin A binding. Widely expressed with highest levels in heart, placenta, kidney and pancreas. Isoform 3 is relatively abundant in hematopoietic tissues and fetal liver. Isoform 1 and isoform 3 are expressed in CD14- PB monocytes and pre-B cell progenitors. Isoform 3 appears to be the major isoform in CD34- promyelocytic and promonocytic cells. During differentiation in monocytic cells, the expression level of isoform 3 decreases and that of isoform 1 increases. Isoform 1 is prominent in stromal cells and, to a lesser extent, in umbilical vein endothelial cells and erythroid progenitors. Isoform 2 is expressed in a erythroid progenitor cell line.

The protein localises to the membrane. In terms of biological role, cell surface receptor, which is involved in signal transduction processes. Recruits PTPN11/SHP-2 to the cell membrane and is a putative substrate of PTPN11/SHP-2. Is a major receptor for concanavalin-A (ConA) and is involved in cellular signaling induced by ConA, which probably includes Src family tyrosine-protein kinases. Isoform 3 seems to have a dominant negative role; it blocks tyrosine phosphorylation of MPZL1 induced by ConA. Isoform 1, but not isoform 2 and isoform 3, may be involved in regulation of integrin-mediated cell motility. The polypeptide is Myelin protein zero-like protein 1 (MPZL1) (Homo sapiens (Human)).